Reading from the N-terminus, the 294-residue chain is ATP synthase gamma chain (294 aa).

The protein belongs to the ATPase gamma chain family. F-type ATPases have 2 components, CF(1) - the catalytic core - and CF(0) - the membrane proton channel. CF(1) has five subunits: alpha(3), beta(3), gamma(1), delta(1), epsilon(1). CF(0) has three main subunits: a, b and c.

The protein resides in the cell inner membrane. In terms of biological role, produces ATP from ADP in the presence of a proton gradient across the membrane. The gamma chain is believed to be important in regulating ATPase activity and the flow of protons through the CF(0) complex. This chain is ATP synthase gamma chain, found in Paraburkholderia phytofirmans (strain DSM 17436 / LMG 22146 / PsJN) (Burkholderia phytofirmans).